The primary structure comprises 431 residues: Methionine aminopeptidase 2-2 (431 aa).

Residues 1–76 (MAAQASEKLQ…PPRVPLSTLF (76 aa)) are disordered. Over residues 35–47 (EAEDDSDDDEVED) the composition is skewed to acidic residues. His-184 contributes to the substrate binding site. Asp-204, Asp-215, and His-284 together coordinate a divalent metal cation. His-292 is a binding site for substrate. A divalent metal cation contacts are provided by Glu-317 and Glu-412.

The protein belongs to the peptidase M24A family. Methionine aminopeptidase eukaryotic type 2 subfamily. Requires Co(2+) as cofactor. It depends on Zn(2+) as a cofactor. The cofactor is Mn(2+). Fe(2+) is required as a cofactor.

The protein resides in the cytoplasm. The catalysed reaction is Release of N-terminal amino acids, preferentially methionine, from peptides and arylamides.. Functionally, cotranslationally removes the N-terminal methionine from nascent proteins. The N-terminal methionine is often cleaved when the second residue in the primary sequence is small and uncharged (Met-Ala-, Cys, Gly, Pro, Ser, Thr, or Val). This chain is Methionine aminopeptidase 2-2, found in Aspergillus niger (strain ATCC MYA-4892 / CBS 513.88 / FGSC A1513).